The chain runs to 616 residues: Fatty acyl-CoA reductase 2, chloroplastic (616 aa).

Residues 1-14 (MEALFLSSSSSSIV) constitute a chloroplast transit peptide. Residues 133 to 143 (FLITGSTGFLA) carry the NAD(P)H-binding motif. Residues Tyr357 and Lys361 contribute to the active site.

It belongs to the fatty acyl-CoA reductase family. As to expression, expressed in the tapetum of anthers.

It is found in the plastid. The protein localises to the chloroplast. The catalysed reaction is a long-chain fatty acyl-CoA + 2 NADPH + 2 H(+) = a long-chain primary fatty alcohol + 2 NADP(+) + CoA. The enzyme catalyses hexadecanoyl-CoA + 2 NADPH + 2 H(+) = hexadecan-1-ol + 2 NADP(+) + CoA. It catalyses the reaction hexadecanoyl-[ACP] + 2 NADPH + 2 H(+) = hexadecan-1-ol + holo-[ACP] + 2 NADP(+). In terms of biological role, catalyzes the reduction of fatty acyl-CoA and -ACP (acyl carrier protein) substrates to fatty alcohols. Triggers the accumulation of C16 and C18 fatty alcohols; converts palmitoyl-acyl carrier protein to the corresponding C16:0 alcohol with NAD(P)H as electron donor, but seems inactive toward palmitoyl- or other acyl-coenzyme A. Also triggers the formation of some C16:0 aldehydes. Involved in the synthesis of the lipid component in sporopollenin. Required for exine patterning of pollen grain by mediating the formation of pollen wall substances. The protein is Fatty acyl-CoA reductase 2, chloroplastic of Arabidopsis thaliana (Mouse-ear cress).